Here is a 396-residue protein sequence, read N- to C-terminus: L-lactate dehydrogenase (396 aa).

Positions 1-380 (MIISAASDYR…SGDSLVQELG (380 aa)) constitute an FMN hydroxy acid dehydrogenase domain. Tyr24 lines the substrate pocket. Ser106 and Gln127 together coordinate FMN. Substrate is bound at residue Tyr129. Residue Thr155 participates in FMN binding. Arg164 contributes to the substrate binding site. Position 251 (Lys251) interacts with FMN. The active-site Proton acceptor is His275. A substrate-binding site is contributed by Arg278. Position 306–330 (306–330 (DSGIRNGLDVVRMIALGADTVLLGR)) interacts with FMN.

Belongs to the FMN-dependent alpha-hydroxy acid dehydrogenase family. FMN is required as a cofactor.

It localises to the cell inner membrane. The catalysed reaction is (S)-lactate + A = pyruvate + AH2. Its function is as follows. Catalyzes the conversion of L-lactate to pyruvate. Is coupled to the respiratory chain. This Salmonella typhimurium (strain LT2 / SGSC1412 / ATCC 700720) protein is L-lactate dehydrogenase.